Reading from the N-terminus, the 633-residue chain is Extracellular metalloproteinase 3 (633 aa).

Residues 1-18 (MHGLLLAGLLALPMNVLA) form the signal peptide. Positions 19–246 (HPAEHHASNV…VHNVVDYVAS (228 aa)) are excised as a propeptide. N-linked (GlcNAc...) asparagine glycans are attached at residues N232 and N410. H429 lines the Zn(2+) pocket. E430 is an active-site residue. H433 provides a ligand contact to Zn(2+). Residues N480 and N622 are each glycosylated (N-linked (GlcNAc...) asparagine).

It belongs to the peptidase M36 family. Requires Zn(2+) as cofactor.

It localises to the secreted. Secreted metalloproteinase that allows assimilation of proteinaceous substrates and probably acts as a virulence factor. The protein is Extracellular metalloproteinase 3 (MEP3) of Arthroderma gypseum (strain ATCC MYA-4604 / CBS 118893) (Microsporum gypseum).